Here is a 98-residue protein sequence, read N- to C-terminus: Probable sodium channel toxin Ts27 (98 aa).

The first 22 residues, 1–22, serve as a signal peptide directing secretion; sequence MYNMVSLFIVAVLLLTYANVEG. Disulfide bonds link Cys36–Cys88, Cys40–Cys63, Cys49–Cys68, and Cys53–Cys70.

This sequence belongs to the long (4 C-C) scorpion toxin superfamily. Sodium channel inhibitor family. In terms of tissue distribution, expressed by the venom gland.

It localises to the secreted. Probable sodium channel toxin. The polypeptide is Probable sodium channel toxin Ts27 (Tityus serrulatus (Brazilian scorpion)).